Here is a 324-residue protein sequence, read N- to C-terminus: Kelch domain-containing protein PF0436 (324 aa).

Kelch repeat units lie at residues 112–160 (EVLL…LWDG), 254–301 (GIYI…WDGR), and 303–323 (IYIV…FTPK).

The chain is Kelch domain-containing protein PF0436 from Pyrococcus furiosus (strain ATCC 43587 / DSM 3638 / JCM 8422 / Vc1).